A 348-amino-acid chain; its full sequence is 4-hydroxyphenylpyruvate dioxygenase (348 aa).

VOC domains are found at residues 11–141 (GFAF…ITSS) and 151–303 (AIDH…IFTE). Fe cation is bound by residues H154, H232, and E312.

It belongs to the 4HPPD family. It depends on Fe cation as a cofactor.

The catalysed reaction is 3-(4-hydroxyphenyl)pyruvate + O2 = homogentisate + CO2. In terms of biological role, catalyzes the transformation of p-hydroxyphenylpyruvate into HGA. Has hemolytic and brown pigment production activity. In Legionella pneumophila (strain Corby), this protein is 4-hydroxyphenylpyruvate dioxygenase (lly).